The sequence spans 530 residues: UDP-N-acetylmuramoyl-L-alanyl-D-glutamate--2,6-diaminopimelate ligase (530 aa).

UDP-N-acetyl-alpha-D-muramoyl-L-alanyl-D-glutamate is bound at residue leucine 52. An ATP-binding site is contributed by 139–145; that stretch reads GTSGKTT. UDP-N-acetyl-alpha-D-muramoyl-L-alanyl-D-glutamate is bound by residues 181–182, serine 208, and arginine 216; that span reads TT. Lysine 248 carries the N6-carboxylysine modification. Residues arginine 410, 434 to 437, glycine 488, and glutamate 492 contribute to the meso-2,6-diaminopimelate site; that span reads DNPR. The Meso-diaminopimelate recognition motif signature appears at 434–437; that stretch reads DNPR.

The protein belongs to the MurCDEF family. MurE subfamily. It depends on Mg(2+) as a cofactor. In terms of processing, carboxylation is probably crucial for Mg(2+) binding and, consequently, for the gamma-phosphate positioning of ATP.

The protein localises to the cytoplasm. It carries out the reaction UDP-N-acetyl-alpha-D-muramoyl-L-alanyl-D-glutamate + meso-2,6-diaminopimelate + ATP = UDP-N-acetyl-alpha-D-muramoyl-L-alanyl-gamma-D-glutamyl-meso-2,6-diaminopimelate + ADP + phosphate + H(+). The protein operates within cell wall biogenesis; peptidoglycan biosynthesis. Catalyzes the addition of meso-diaminopimelic acid to the nucleotide precursor UDP-N-acetylmuramoyl-L-alanyl-D-glutamate (UMAG) in the biosynthesis of bacterial cell-wall peptidoglycan. This chain is UDP-N-acetylmuramoyl-L-alanyl-D-glutamate--2,6-diaminopimelate ligase, found in Mycobacterium leprae (strain TN).